We begin with the raw amino-acid sequence, 725 residues long: Fatty acid oxidation complex subunit alpha (725 aa).

Positions 1 to 189 (MIYQGENLSV…ALGMIDGVVS (189 aa)) are enoyl-CoA hydratase/isomerase. Asp296 lines the substrate pocket. A 3-hydroxyacyl-CoA dehydrogenase region spans residues 311 to 725 (EPVTSAAVLG…APQSLSAPSA (415 aa)). Residues Met324, Asp343, 400 to 402 (VVE), Lys407, and Ser429 each bind NAD(+). His450 (for 3-hydroxyacyl-CoA dehydrogenase activity) is an active-site residue. Asn453 is an NAD(+) binding site. Substrate-binding residues include Asn500 and Tyr660.

In the N-terminal section; belongs to the enoyl-CoA hydratase/isomerase family. It in the C-terminal section; belongs to the 3-hydroxyacyl-CoA dehydrogenase family. In terms of assembly, heterotetramer of two alpha chains (FadB) and two beta chains (FadA).

The catalysed reaction is a (3S)-3-hydroxyacyl-CoA + NAD(+) = a 3-oxoacyl-CoA + NADH + H(+). The enzyme catalyses a (3S)-3-hydroxyacyl-CoA = a (2E)-enoyl-CoA + H2O. It carries out the reaction a 4-saturated-(3S)-3-hydroxyacyl-CoA = a (3E)-enoyl-CoA + H2O. It catalyses the reaction (3S)-3-hydroxybutanoyl-CoA = (3R)-3-hydroxybutanoyl-CoA. The catalysed reaction is a (3Z)-enoyl-CoA = a 4-saturated (2E)-enoyl-CoA. The enzyme catalyses a (3E)-enoyl-CoA = a 4-saturated (2E)-enoyl-CoA. It functions in the pathway lipid metabolism; fatty acid beta-oxidation. Its function is as follows. Involved in the aerobic and anaerobic degradation of long-chain fatty acids via beta-oxidation cycle. Catalyzes the formation of 3-oxoacyl-CoA from enoyl-CoA via L-3-hydroxyacyl-CoA. It can also use D-3-hydroxyacyl-CoA and cis-3-enoyl-CoA as substrate. The protein is Fatty acid oxidation complex subunit alpha of Aliivibrio fischeri (strain MJ11) (Vibrio fischeri).